The chain runs to 110 residues: Hydrogenase maturation factor HypA (110 aa).

His-2 contributes to the Ni(2+) binding site. Zn(2+) contacts are provided by Cys-70, Cys-73, Cys-86, and Cys-89.

It belongs to the HypA/HybF family.

In terms of biological role, involved in the maturation of [NiFe] hydrogenases. Required for nickel insertion into the metal center of the hydrogenase. In Geotalea uraniireducens (strain Rf4) (Geobacter uraniireducens), this protein is Hydrogenase maturation factor HypA.